The sequence spans 375 residues: Histidine biosynthesis bifunctional protein HisB (375 aa).

Residues 1 to 168 (MTPIVFIDRD…GIAHTLADAP (168 aa)) are histidinol-phosphatase. The active-site Nucleophile is the D8. 3 residues coordinate Mg(2+): D8, D10, and D128. The Proton donor role is filled by D10. The imidazoleglycerol-phosphate dehydratase stretch occupies residues 169 to 375 (RRAVVQRHTK…HVLPSTKGAL (207 aa)).

In the N-terminal section; belongs to the histidinol-phosphatase family. It in the C-terminal section; belongs to the imidazoleglycerol-phosphate dehydratase family. Mg(2+) is required as a cofactor.

Its subcellular location is the cytoplasm. It carries out the reaction D-erythro-1-(imidazol-4-yl)glycerol 3-phosphate = 3-(imidazol-4-yl)-2-oxopropyl phosphate + H2O. The enzyme catalyses L-histidinol phosphate + H2O = L-histidinol + phosphate. Its pathway is amino-acid biosynthesis; L-histidine biosynthesis; L-histidine from 5-phospho-alpha-D-ribose 1-diphosphate: step 6/9. It functions in the pathway amino-acid biosynthesis; L-histidine biosynthesis; L-histidine from 5-phospho-alpha-D-ribose 1-diphosphate: step 8/9. The protein is Histidine biosynthesis bifunctional protein HisB of Xylella fastidiosa (strain Temecula1 / ATCC 700964).